We begin with the raw amino-acid sequence, 74 residues long: MISDIILFGTLMVNAGAVLNFKLQKTPSESFVEKTEPTAGDKIRDFLGAVRYFRAFIGLWNIFIMFLMLVFFGS.

The helical transmembrane segment at 53–73 (FRAFIGLWNIFIMFLMLVFFG) threads the bilayer.

It belongs to the SMIM7 family.

The protein localises to the membrane. The polypeptide is Protein SMIM7 homolog (Ixodes scapularis (Black-legged tick)).